Here is a 492-residue protein sequence, read N- to C-terminus: Ketol-acid reductoisomerase (NADP(+)) (492 aa).

In terms of domain architecture, KARI N-terminal Rossmann spans 17 to 208 (LGQCRLMKKN…GSNKAGVLES (192 aa)). Residues 45 to 48 (CGSQ), arginine 68, serine 76, and serine 78 each bind NADP(+). Residue histidine 132 is part of the active site. Position 158 (glycine 158) interacts with NADP(+). KARI C-terminal knotted domains lie at 209 to 344 (SFVA…KAPV) and 345 to 487 (YCET…MKDM). Mg(2+) contacts are provided by aspartate 217, glutamate 221, glutamate 389, and glutamate 393. Serine 414 contributes to the substrate binding site.

This sequence belongs to the ketol-acid reductoisomerase family. Mg(2+) is required as a cofactor.

It carries out the reaction (2R)-2,3-dihydroxy-3-methylbutanoate + NADP(+) = (2S)-2-acetolactate + NADPH + H(+). It catalyses the reaction (2R,3R)-2,3-dihydroxy-3-methylpentanoate + NADP(+) = (S)-2-ethyl-2-hydroxy-3-oxobutanoate + NADPH + H(+). It functions in the pathway amino-acid biosynthesis; L-isoleucine biosynthesis; L-isoleucine from 2-oxobutanoate: step 2/4. Its pathway is amino-acid biosynthesis; L-valine biosynthesis; L-valine from pyruvate: step 2/4. Functionally, involved in the biosynthesis of branched-chain amino acids (BCAA). Catalyzes an alkyl-migration followed by a ketol-acid reduction of (S)-2-acetolactate (S2AL) to yield (R)-2,3-dihydroxy-isovalerate. In the isomerase reaction, S2AL is rearranged via a Mg-dependent methyl migration to produce 3-hydroxy-3-methyl-2-ketobutyrate (HMKB). In the reductase reaction, this 2-ketoacid undergoes a metal-dependent reduction by NADPH to yield (R)-2,3-dihydroxy-isovalerate. The sequence is that of Ketol-acid reductoisomerase (NADP(+)) from Blochmanniella floridana.